We begin with the raw amino-acid sequence, 373 residues long: Peptide chain release factor 2 (373 aa).

At Gln-251 the chain carries N5-methylglutamine.

This sequence belongs to the prokaryotic/mitochondrial release factor family. Post-translationally, methylated by PrmC. Methylation increases the termination efficiency of RF2.

It localises to the cytoplasm. Peptide chain release factor 2 directs the termination of translation in response to the peptide chain termination codons UGA and UAA. The sequence is that of Peptide chain release factor 2 from Salinispora arenicola (strain CNS-205).